Here is a 435-residue protein sequence, read N- to C-terminus: Bud site selection protein RAX1 (435 aa).

The Cytoplasmic portion of the chain corresponds to 1 to 297; sequence MKEELSKVSS…PFSNHTSISR (297 aa). The 90-residue stretch at 159–248 folds into the RGS domain; that stretch reads VDEIMKRRSQ…LEMDCFPKFL (90 aa). The residue at position 167 (serine 167) is a Phosphoserine. A helical transmembrane segment spans residues 298–318; sequence IGFGLLWLGIGFWIGYVLIFL. The Extracellular portion of the chain corresponds to 319–325; it reads AYSRAIR. A helical transmembrane segment spans residues 326 to 346; that stretch reads VVTVVPFTLGCYCIVCGMYQV. Over 347–409 the chain is Cytoplasmic; it reads DIVYSWFGVT…FTRQLLRKRG (63 aa). The helical transmembrane segment at 410 to 430 threads the bilayer; the sequence is LWCLLLVVGATAAFTVIFSCV. At 431–435 the chain is on the extracellular side; it reads PGRRV.

As to quaternary structure, forms an heterodimeric complex with RAX2. Also interacts with BUD8 and BUD9.

It localises to the cell membrane. It is found in the bud neck. Its subcellular location is the bud tip. Functionally, required for the establishment of the bipolar budding pattern. Involved in selecting bud sites at both the distal and proximal poles of daughter cells as well as near previously used division sites on mother cells. The RAX1-RAX2 complex performs the asymmetric localization of the two cortical landmarks, BUD8 and BUD9, at the distal and proximal poles, respectively. The sequence is that of Bud site selection protein RAX1 from Saccharomyces cerevisiae (strain ATCC 204508 / S288c) (Baker's yeast).